A 524-amino-acid chain; its full sequence is Inosine-5'-monophosphate dehydrogenase 4 (524 aa).

CBS domains lie at 122 to 183 (FINS…VVSE) and 185 to 241 (MTKN…PLAS). Position 125 is a phosphoserine (Ser-125). NAD(+)-binding positions include 279-281 (DSS) and 329-331 (GMG). Positions 331 and 333 each coordinate K(+). Ser-334 contributes to the IMP binding site. A K(+)-binding site is contributed by Cys-336. Cys-336 acts as the Thioimidate intermediate in catalysis. IMP-binding positions include 369-371 (DGG), 392-393 (GG), and 416-420 (YRGMG). The active-site Proton acceptor is Arg-438. Gln-450 is an IMP binding site. 3 residues coordinate K(+): Glu-509, Gly-510, and Gly-511.

This sequence belongs to the IMPDH/GMPR family. In terms of assembly, homotetramer. Seems to be able to form heterotetramers composed from more than 1 of the 3 IMPDH gene products (IMD2-4). Requires K(+) as cofactor.

Its subcellular location is the cytoplasm. The catalysed reaction is IMP + NAD(+) + H2O = XMP + NADH + H(+). The protein operates within purine metabolism; XMP biosynthesis via de novo pathway; XMP from IMP: step 1/1. Mycophenolic acid (MPA) is a non-competitive inhibitor that prevents formation of the closed enzyme conformation by binding to the same site as the amobile flap. In contrast, mizoribine monophosphate (MZP) is a competitive inhibitor that induces the closed conformation. MPA is a potent inhibitor of mammalian IMPDHs but a poor inhibitor of the bacterial enzymes. MZP is a more potent inhibitor of bacterial IMPDH. In terms of biological role, catalyzes the conversion of inosine 5'-phosphate (IMP) to xanthosine 5'-phosphate (XMP), the first committed and rate-limiting step in the de novo synthesis of guanine nucleotides, and therefore plays an important role in the regulation of cell growth. The chain is Inosine-5'-monophosphate dehydrogenase 4 from Saccharomyces cerevisiae (strain ATCC 204508 / S288c) (Baker's yeast).